Consider the following 29-residue polypeptide: Histone H2B (29 aa).

Residues 1–29 (MPEPAKSAPKKGSTRTAAKGGKKRRKSRK) form a disordered region. N6-acetyllysine is present on residues Lys-6 and Lys-11. Position 13 is a phosphoserine (Ser-13). Over residues 20 to 29 (GGKKRRKSRK) the composition is skewed to basic residues.

The protein belongs to the histone H2B family. The nucleosome is a histone octamer containing two molecules each of H2A, H2B, H3 and H4 assembled in one H3-H4 heterotetramer and two H2A-H2B heterodimers. The octamer wraps approximately 147 bp of DNA. In terms of processing, monoubiquitination at the C-terminal Lys gives a specific tag for epigenetic transcriptional activation and is also prerequisite for histone H3 'Lys-4' and 'Lys-79' methylation. Phosphorylated during apoptosis; which facilitates apoptotic chromatin condensation.

It is found in the nucleus. Its subcellular location is the chromosome. Its function is as follows. Core component of nucleosome. Nucleosomes wrap and compact DNA into chromatin, limiting DNA accessibility to the cellular machineries which require DNA as a template. Histones thereby play a central role in transcription regulation, DNA repair, DNA replication and chromosomal stability. DNA accessibility is regulated via a complex set of post-translational modifications of histones, also called histone code, and nucleosome remodeling. This Cyprinus carpio (Common carp) protein is Histone H2B.